The primary structure comprises 359 residues: MRVLVAMSGGVDSSVAAARMVDAGHDVVGVHLALSATPGTLRTGSRGCCSKEDAGDARRVADVLDIPFYVWDFADRFKEDVIDDFVASYERGETPNPCVRCNEKIKFSALAGRALALGFDALATGHYARLSDGRLRRAVDADKDQSYVLAVLTAQQLRHAVFPIGDTPKAQIRAEAAERGLAVADKPDSHDICFIPSGDTRAFLGARIGVRRGAVVDAGGTKLAEHEGVHGFTIGQRKGLGIAGPGPDGQPRYVTGIDAATGTVRVGGAEDLDVSRLTGERPVFTSGAAFGGPVECQVQVRAHGGLADAVASHDAGVLSVELRAPLRGVAAGQTMVIYRPDPEGDEVLASATISGAAGR.

Residues 6–13 (AMSGGVDS) and leucine 32 contribute to the ATP site. Residue cysteine 101 is the Nucleophile of the active site. A disulfide bridge connects residues cysteine 101 and cysteine 193. Glycine 125 serves as a coordination point for ATP. Residues 143 to 145 (KDQ) form an interaction with tRNA region. Residue cysteine 193 is the Cysteine persulfide intermediate of the active site.

The protein belongs to the MnmA/TRMU family.

It is found in the cytoplasm. It catalyses the reaction S-sulfanyl-L-cysteinyl-[protein] + uridine(34) in tRNA + AH2 + ATP = 2-thiouridine(34) in tRNA + L-cysteinyl-[protein] + A + AMP + diphosphate + H(+). Functionally, catalyzes the 2-thiolation of uridine at the wobble position (U34) of tRNA, leading to the formation of s(2)U34. The sequence is that of tRNA-specific 2-thiouridylase MnmA from Mycobacterium sp. (strain JLS).